The sequence spans 147 residues: Hemoglobin subunit gamma-1 (147 aa).

The Globin domain occupies 3–147 (NFTAEDKAAI…VASALGSRYH (145 aa)). T13 carries the post-translational modification Phosphothreonine. 3 positions are modified to phosphoserine: S45, S51, and S53. K60 carries the N6-acetyllysine modification. H64 serves as a coordination point for heme b. K83 is modified (N6-acetyllysine). H93 contacts heme b. C94 is modified (S-nitrosocysteine). At S140 the chain carries Phosphoserine.

Belongs to the globin family. In terms of assembly, heterotetramer of two alpha chains and two gamma chains in fetal hemoglobin (Hb F). In terms of tissue distribution, red blood cells.

Its function is as follows. Gamma chains make up the fetal hemoglobin F, in combination with alpha chains. The polypeptide is Hemoglobin subunit gamma-1 (HBG1) (Plecturocebus moloch (Dusky titi monkey)).